A 502-amino-acid chain; its full sequence is Probable glycine dehydrogenase (decarboxylating) subunit 2 (502 aa).

At Lys-273 the chain carries N6-(pyridoxal phosphate)lysine.

This sequence belongs to the GcvP family. C-terminal subunit subfamily. As to quaternary structure, the glycine cleavage system is composed of four proteins: P, T, L and H. In this organism, the P 'protein' is a heterodimer of two subunits. Pyridoxal 5'-phosphate is required as a cofactor.

It catalyses the reaction N(6)-[(R)-lipoyl]-L-lysyl-[glycine-cleavage complex H protein] + glycine + H(+) = N(6)-[(R)-S(8)-aminomethyldihydrolipoyl]-L-lysyl-[glycine-cleavage complex H protein] + CO2. In terms of biological role, the glycine cleavage system catalyzes the degradation of glycine. The P protein binds the alpha-amino group of glycine through its pyridoxal phosphate cofactor; CO(2) is released and the remaining methylamine moiety is then transferred to the lipoamide cofactor of the H protein. This chain is Probable glycine dehydrogenase (decarboxylating) subunit 2, found in Pyrococcus horikoshii (strain ATCC 700860 / DSM 12428 / JCM 9974 / NBRC 100139 / OT-3).